Reading from the N-terminus, the 389-residue chain is MAIAAIMGDVLMLMGFNKAAFGKLNSASRAALIGAVIWAVLSIVYLTIFNGWKNLFTMLPHEFFIVLLSIALPIGLTVLILMLSRIVKSVDTLKSEVTTLSRNDVSSEGSVAMLADLFREHRAAIAAQVEAQVEATTQLIRLNQEGRALAAPAQASGTDEAMTLLAQLFREHREAVAAQLEAQASATAQLVQVTRDSRDGIVDELRSQRVLSQEITQELSQITQSRTVAPAPPGLDPSQRIDRMRALAEVLGLALNDLSMTATQVLTEHLNAAHGDRDGTRKFISTLTTAYFAGDKNVFFRSLVQEAVNRSEQLRRCAEDTESVRQQISKILREAREIRSLVAACDPNDLVRIVFEDGELWALEKALAEHFLIDGSPVWTETAPDSGMD.

Topologically, residues 1 to 31 (MAIAAIMGDVLMLMGFNKAAFGKLNSASRAA) are cytoplasmic. A helical transmembrane segment spans residues 32–52 (LIGAVIWAVLSIVYLTIFNGW). At 53-62 (KNLFTMLPHE) the chain is on the lumenal side. The chain crosses the membrane as a helical span at residues 63–83 (FFIVLLSIALPIGLTVLILML). The Cytoplasmic segment spans residues 84–389 (SRIVKSVDTL…TETAPDSGMD (306 aa)).

The protein belongs to the magnetosome MamY family.

Its subcellular location is the magnetosome membrane. Functionally, causes tubulation when added to magnetosome-derived liposomes, binds liposomes; may be involved in constriction of the cell inner membrane to form mature magnetosomes. Binds preferentially to cardiolipin, a component of bacterial membranes, with very poor to no binding of other tested (phospho)lipids. Addition of cardiolipin to magnetosome-derived lipids increases tubulation. May function with MamX, MamZ amd Mms6. The protein is Liposome tubulation protein MamY of Paramagnetospirillum magneticum (strain ATCC 700264 / AMB-1) (Magnetospirillum magneticum).